The chain runs to 218 residues: Small ribosomal subunit protein uS3c (218 aa).

A KH type-2 domain is found at 39–120 (IRNFMNKELL…IITCKVVGVT (82 aa)).

This sequence belongs to the universal ribosomal protein uS3 family. As to quaternary structure, part of the 30S ribosomal subunit.

The protein resides in the plastid. It is found in the chloroplast. This chain is Small ribosomal subunit protein uS3c (rps3), found in Euglena gracilis.